The chain runs to 483 residues: Probable gamma-aminobutyrate transaminase 4 (483 aa).

138–139 (GS) contacts pyridoxal 5'-phosphate. Y171 provides a ligand contact to substrate. D278 contributes to the pyridoxal 5'-phosphate binding site. Position 307 (K307) interacts with substrate. K307 is modified (N6-(pyridoxal phosphate)lysine).

This sequence belongs to the class-III pyridoxal-phosphate-dependent aminotransferase family. Not detected in roots, stems, flowers or leaves of healthy plants.

It is found in the cytoplasm. It catalyses the reaction 4-aminobutanoate + pyruvate = succinate semialdehyde + L-alanine. The enzyme catalyses 4-aminobutanoate + glyoxylate = succinate semialdehyde + glycine. Functionally, transaminase that degrades gamma-amino butyric acid (GABA). The chain is Probable gamma-aminobutyrate transaminase 4 (GABA-T) from Oryza sativa subsp. japonica (Rice).